The sequence spans 139 residues: Putative pre-16S rRNA nuclease (139 aa).

The protein belongs to the YqgF nuclease family.

It localises to the cytoplasm. In terms of biological role, could be a nuclease involved in processing of the 5'-end of pre-16S rRNA. The sequence is that of Putative pre-16S rRNA nuclease from Legionella pneumophila subsp. pneumophila (strain Philadelphia 1 / ATCC 33152 / DSM 7513).